The sequence spans 546 residues: Chaperonin GroEL (546 aa).

ATP is bound by residues T30–P33, K51, D87–T91, G415, and D496. Positions E527–F546 are disordered. Gly residues predominate over residues A534 to F546.

This sequence belongs to the chaperonin (HSP60) family. Forms a cylinder of 14 subunits composed of two heptameric rings stacked back-to-back. Interacts with the co-chaperonin GroES.

Its subcellular location is the cytoplasm. The catalysed reaction is ATP + H2O + a folded polypeptide = ADP + phosphate + an unfolded polypeptide.. Functionally, together with its co-chaperonin GroES, plays an essential role in assisting protein folding. The GroEL-GroES system forms a nano-cage that allows encapsulation of the non-native substrate proteins and provides a physical environment optimized to promote and accelerate protein folding. The protein is Chaperonin GroEL of Rhodospirillum centenum (strain ATCC 51521 / SW).